Here is a 211-residue protein sequence, read N- to C-terminus: Orotate phosphoribosyltransferase (211 aa).

5-phospho-alpha-D-ribose 1-diphosphate-binding positions include Arg103, Lys107, His109, and 129–137; that span reads EDLISTGKS. Ser133 contacts orotate.

Belongs to the purine/pyrimidine phosphoribosyltransferase family. PyrE subfamily. In terms of assembly, homodimer. Mg(2+) is required as a cofactor.

It catalyses the reaction orotidine 5'-phosphate + diphosphate = orotate + 5-phospho-alpha-D-ribose 1-diphosphate. It functions in the pathway pyrimidine metabolism; UMP biosynthesis via de novo pathway; UMP from orotate: step 1/2. Its function is as follows. Catalyzes the transfer of a ribosyl phosphate group from 5-phosphoribose 1-diphosphate to orotate, leading to the formation of orotidine monophosphate (OMP). The chain is Orotate phosphoribosyltransferase from Fusobacterium nucleatum subsp. nucleatum (strain ATCC 25586 / DSM 15643 / BCRC 10681 / CIP 101130 / JCM 8532 / KCTC 2640 / LMG 13131 / VPI 4355).